Reading from the N-terminus, the 122-residue chain is Large ribosomal subunit protein uL14c (122 aa).

The protein belongs to the universal ribosomal protein uL14 family. Part of the 50S ribosomal subunit.

Its subcellular location is the plastid. It is found in the chloroplast. In terms of biological role, binds to 23S rRNA. This chain is Large ribosomal subunit protein uL14c, found in Jasminum nudiflorum (Winter jasmine).